Consider the following 331-residue polypeptide: Phosphoenolpyruvate transferase (331 aa).

Residue aspartate 63 coordinates 7,8-didemethyl-8-hydroxy-5-deazariboflavin.

This sequence belongs to the CofD family. As to quaternary structure, homodimer. The cofactor is Mg(2+).

The catalysed reaction is enolpyruvoyl-2-diphospho-5'-guanosine + 7,8-didemethyl-8-hydroxy-5-deazariboflavin = dehydro coenzyme F420-0 + GMP + H(+). It functions in the pathway cofactor biosynthesis; coenzyme F420 biosynthesis. Its function is as follows. Catalyzes the transfer of the phosphoenolpyruvate moiety from enoylpyruvoyl-2-diphospho-5'-guanosine (EPPG) to 7,8-didemethyl-8-hydroxy-5-deazariboflavin (FO) with the formation of dehydro coenzyme F420-0 and GMP. This Mycobacterium bovis (strain ATCC BAA-935 / AF2122/97) protein is Phosphoenolpyruvate transferase.